Reading from the N-terminus, the 69-residue chain is NAD(P)H-quinone oxidoreductase subunit O (69 aa).

This sequence belongs to the complex I NdhO subunit family. NDH-1 can be composed of about 15 different subunits; different subcomplexes with different compositions have been identified which probably have different functions.

The protein resides in the cellular thylakoid membrane. It carries out the reaction a plastoquinone + NADH + (n+1) H(+)(in) = a plastoquinol + NAD(+) + n H(+)(out). It catalyses the reaction a plastoquinone + NADPH + (n+1) H(+)(in) = a plastoquinol + NADP(+) + n H(+)(out). NDH-1 shuttles electrons from an unknown electron donor, via FMN and iron-sulfur (Fe-S) centers, to quinones in the respiratory and/or the photosynthetic chain. The immediate electron acceptor for the enzyme in this species is believed to be plastoquinone. Couples the redox reaction to proton translocation, and thus conserves the redox energy in a proton gradient. Cyanobacterial NDH-1 also plays a role in inorganic carbon-concentration. This chain is NAD(P)H-quinone oxidoreductase subunit O, found in Acaryochloris marina (strain MBIC 11017).